A 307-amino-acid polypeptide reads, in one-letter code: tRNA pseudouridine synthase B (307 aa).

The Nucleophile role is filled by aspartate 48.

The protein belongs to the pseudouridine synthase TruB family. Type 1 subfamily.

The catalysed reaction is uridine(55) in tRNA = pseudouridine(55) in tRNA. In terms of biological role, responsible for synthesis of pseudouridine from uracil-55 in the psi GC loop of transfer RNAs. The chain is tRNA pseudouridine synthase B from Pasteurella multocida (strain Pm70).